We begin with the raw amino-acid sequence, 741 residues long: Penicillin-binding protein 1B (741 aa).

Over Met-1–Phe-12 the chain is Cytoplasmic. Residues Leu-13 to Phe-33 form a helical; Signal-anchor for type II membrane protein membrane-spanning segment. The Extracellular portion of the chain corresponds to Lys-34 to Thr-741. The transglycosylase stretch occupies residues Leu-139–Val-311. Glu-177 serves as the catalytic Proton donor; for transglycosylase activity. The tract at residues Glu-395–Asn-687 is transpeptidase. Ser-454 functions as the Acyl-ester intermediate; for transpeptidase activity in the catalytic mechanism.

In the N-terminal section; belongs to the glycosyltransferase 51 family. This sequence in the C-terminal section; belongs to the transpeptidase family.

The protein localises to the cell membrane. The enzyme catalyses [GlcNAc-(1-&gt;4)-Mur2Ac(oyl-L-Ala-gamma-D-Glu-L-Lys-D-Ala-D-Ala)](n)-di-trans,octa-cis-undecaprenyl diphosphate + beta-D-GlcNAc-(1-&gt;4)-Mur2Ac(oyl-L-Ala-gamma-D-Glu-L-Lys-D-Ala-D-Ala)-di-trans,octa-cis-undecaprenyl diphosphate = [GlcNAc-(1-&gt;4)-Mur2Ac(oyl-L-Ala-gamma-D-Glu-L-Lys-D-Ala-D-Ala)](n+1)-di-trans,octa-cis-undecaprenyl diphosphate + di-trans,octa-cis-undecaprenyl diphosphate + H(+). It catalyses the reaction Preferential cleavage: (Ac)2-L-Lys-D-Ala-|-D-Ala. Also transpeptidation of peptidyl-alanyl moieties that are N-acyl substituents of D-alanine.. Its pathway is cell wall biogenesis; peptidoglycan biosynthesis. Cell wall formation. Synthesis of cross-linked peptidoglycan from the lipid intermediates. The enzyme has a penicillin-insensitive transglycosylase N-terminal domain (formation of linear glycan strands) and a penicillin-sensitive transpeptidase C-terminal domain (cross-linking of the peptide subunits). This is Penicillin-binding protein 1B (mrcB) from Buchnera aphidicola subsp. Baizongia pistaciae (strain Bp).